Consider the following 20-residue polypeptide: Pregnancy-associated glycoprotein 67A (20 aa).

Residues Asn4 and Asn20 are each glycosylated (N-linked (GlcNAc...) asparagine).

The protein belongs to the peptidase A1 family. Chorionic epithelium (trophectoderm) and placental cotyledons.

It localises to the secreted. Its subcellular location is the extracellular space. The polypeptide is Pregnancy-associated glycoprotein 67A (Bison bonasus (European bison)).